The primary structure comprises 362 residues: Apelin receptor A (362 aa).

At 1 to 34 the chain is on the extracellular side; that stretch reads MEPTSEYTETYDYYDTGYNDSGCDYSEWEPSYSL. A glycan (N-linked (GlcNAc...) asparagine) is linked at asparagine 19. 2 disulfides stabilise this stretch: cysteine 23–cysteine 286 and cysteine 105–cysteine 184. Residues 35-55 form a helical membrane-spanning segment; the sequence is IPVLYMLIFILGLSGNGVVIF. Residues 56–73 are Cytoplasmic-facing; the sequence is TVWRAKSKRRAADVYIGN. Residues 74 to 94 form a helical membrane-spanning segment; sequence LALADLTFVITLPLWAVYTAL. Residues 95–106 are Extracellular-facing; the sequence is GYHWPFGVALCK. The helical transmembrane segment at 107–127 threads the bilayer; that stretch reads ISSYVVLVNMYASVFCLTCLS. The Cytoplasmic portion of the chain corresponds to 128–149; sequence FDRYLAIVHSLSSGRLRSRATM. Residues 150-170 form a helical membrane-spanning segment; sequence LASLGAIWFLSCLLAVPTLLF. Topologically, residues 171–211 are extracellular; the sequence is RTTVDDTGSNRTTCAMDFSLVTLNQDHESLWIAGLSLSSSA. The N-linked (GlcNAc...) asparagine glycan is linked to asparagine 180. Residues 212 to 232 traverse the membrane as a helical segment; that stretch reads LGFLLPFLAMTVCYCFIGCTV. The Cytoplasmic portion of the chain corresponds to 233 to 248; that stretch reads TRHFSHLRKEDQKKRR. A helical transmembrane segment spans residues 249–269; that stretch reads LLKIITTLVVVFAFCWTPFHV. Over 270-284 the chain is Extracellular; sequence LKSMDALSYLDLAPN. Residues 285-305 form a helical membrane-spanning segment; the sequence is SCGFLHFLLLAHPYATCLAYV. Residues 306–362 lie on the Cytoplasmic side of the membrane; it reads NSCLNPFLYAFFDLRFRSQCLCLLNLKKAMHGHMSSMSSTLSAQTQKSEVQSLATKV.

Belongs to the G-protein coupled receptor 1 family. First expressed before epiboly in dorsal precursors. During epiboly, expressed in the enveloping layer, yolk syncytial layer and migrating mesendoderm. During segmentation stages, expressed in epithelial structures such as adaxial cells, border cells of the newly formed somites, developing lens, otic vesicles and venous vasculature.

It localises to the cell membrane. Its function is as follows. G protein-coupled receptor for peptide hormones apelin (apln) and apelin receptor early endogenous ligand (apela), that plays a role in the regulation of normal cardiovascular function and fluid homeostasis. When acting as apelin receptor, activates both G(i) protein pathway that inhibits adenylate cyclase activity, and the beta-arrestin pathway that promotes internalization of the receptor. Also functions as mechanoreceptor that is activated by pathological stimuli in a G-protein-independent fashion to induce beta-arrestin signaling, hence eliciting cardiac hypertrophy. However, the presence of apelin ligand blunts cardiac hypertrophic induction from APLNR/APJ on response to pathological stimuli. Plays a key role in early development such as gastrulation, blood vessels formation and heart morphogenesis by acting as a receptor for apela hormone, promoting endoderm and mesendoderm cell migration and regulating the migration of cells fated to become myocardial progenitors, respectively. Positively regulates angioblast migration toward the embryonic midline, i.e. the position of the future vessel formation, during vasculogenesis. May promote sinus venosus (SV)-derived endothelial cells migration into the developing heart to promote coronary blood vessel development. Required for cardiovascular development, particularly for intersomitic vein angiogenesis by acting as a receptor for apln hormone. Also plays a role in various processes in adults such as regulation of blood vessel formation, blood pressure, heart contractility, and heart failure. Acts redundantly with agtrl1b in heart development. The sequence is that of Apelin receptor A (aplnra) from Danio rerio (Zebrafish).